Here is a 391-residue protein sequence, read N- to C-terminus: UPF0229 protein BCG9842_B4751 (391 aa).

A compositionally biased stretch (polar residues) spans 1–16 (MGEENQPNYTISQENW). Disordered stretches follow at residues 1–31 (MGEENQPNYTISQENWSLHRKGYDDQQRHQE) and 80–117 (HVGQGNGDSKVGDVVARDGSGGQKQKGPGKGQGAGDAA). Residues 21–31 (KGYDDQQRHQE) are compositionally biased toward basic and acidic residues. The span at 98–115 (GSGGQKQKGPGKGQGAGD) shows a compositional bias: gly residues.

It belongs to the UPF0229 family.

In Bacillus cereus (strain G9842), this protein is UPF0229 protein BCG9842_B4751.